The following is a 347-amino-acid chain: Phosphoribosylformylglycinamidine cyclo-ligase (347 aa).

Belongs to the AIR synthase family.

It localises to the cytoplasm. The enzyme catalyses 2-formamido-N(1)-(5-O-phospho-beta-D-ribosyl)acetamidine + ATP = 5-amino-1-(5-phospho-beta-D-ribosyl)imidazole + ADP + phosphate + H(+). It participates in purine metabolism; IMP biosynthesis via de novo pathway; 5-amino-1-(5-phospho-D-ribosyl)imidazole from N(2)-formyl-N(1)-(5-phospho-D-ribosyl)glycinamide: step 2/2. The chain is Phosphoribosylformylglycinamidine cyclo-ligase from Prochlorococcus marinus (strain MIT 9215).